Here is a 353-residue protein sequence, read N- to C-terminus: MSSKQPSLSYKDAGVDIDAGEALVERIKGVAKRTARPEVMGGLGGFGALCEIPAGYKQPVLVSGTDGVGTKLRLALNLNKHDSIGQDLVAMCVNDLVVCGAEPLFFLDYYATGKLNVDVAATVVTGIGAGCELAGCSLVGGETAEMPGMYEGEDYDLAGFCVGVVEKAEIIDGSRVQAGDALIALPSSGPHSNGYSLIRKIIEVSGADIAQVQLDGKPLADLLMAPTRIYVKPLLQLIKQTGAVKAMAHITGGGLLDNIPRVLPDNAQAVIDVASWNRPAVFDWLQEQGNVDETEMHRVLNCGVGMVICVAQSDAEKALEVLRAAGEQPWQIGRIETCGADAERVVLNNLKNH.

The protein belongs to the AIR synthase family.

It is found in the cytoplasm. It carries out the reaction 2-formamido-N(1)-(5-O-phospho-beta-D-ribosyl)acetamidine + ATP = 5-amino-1-(5-phospho-beta-D-ribosyl)imidazole + ADP + phosphate + H(+). It functions in the pathway purine metabolism; IMP biosynthesis via de novo pathway; 5-amino-1-(5-phospho-D-ribosyl)imidazole from N(2)-formyl-N(1)-(5-phospho-D-ribosyl)glycinamide: step 2/2. In Pseudomonas aeruginosa (strain ATCC 15692 / DSM 22644 / CIP 104116 / JCM 14847 / LMG 12228 / 1C / PRS 101 / PAO1), this protein is Phosphoribosylformylglycinamidine cyclo-ligase.